We begin with the raw amino-acid sequence, 104 residues long: Large ribosomal subunit protein uL24 (104 aa).

It belongs to the universal ribosomal protein uL24 family. Part of the 50S ribosomal subunit.

One of two assembly initiator proteins, it binds directly to the 5'-end of the 23S rRNA, where it nucleates assembly of the 50S subunit. Functionally, one of the proteins that surrounds the polypeptide exit tunnel on the outside of the subunit. The chain is Large ribosomal subunit protein uL24 from Nitrobacter hamburgensis (strain DSM 10229 / NCIMB 13809 / X14).